We begin with the raw amino-acid sequence, 905 residues long: Dopamine D2-like receptor (905 aa).

A disordered region spans residues 1–23; sequence MLSPFDWRRGISSSGTGGTMAAQ. Topologically, residues 1–377 are extracellular; the sequence is MLSPFDWRRG…GELRVVDHNY (377 aa). 8 N-linked (GlcNAc...) asparagine glycosylation sites follow: asparagine 88, asparagine 146, asparagine 156, asparagine 166, asparagine 174, asparagine 257, asparagine 314, and asparagine 343. Residues 378-398 traverse the membrane as a helical segment; sequence WALILILFPILTLFGNILVIL. Residues 399-416 lie on the Cytoplasmic side of the membrane; sequence SVCRERSLQTVTNYFIVS. A helical membrane pass occupies residues 417–437; it reads LAIADLLVAVVVMPFAVYFLV. Topologically, residues 438–450 are extracellular; that stretch reads NGAWALPDVVCDF. The cysteines at positions 448 and 525 are disulfide-linked. Residues 451–471 form a helical membrane-spanning segment; that stretch reads YIAMDVICSTSSIFNLVAISI. The Cytoplasmic portion of the chain corresponds to 472 to 493; sequence DRYIAVTQPIKYAKHKNSRRVC. Residues 494 to 514 form a helical membrane-spanning segment; the sequence is LTILLVWAISAAIGSPIVLGL. Over 515-531 the chain is Extracellular; that stretch reads NNTPNREPDVCAFYNAD. The helical transmembrane segment at 532-552 threads the bilayer; sequence FILYSSLSSFYIPCIIMVFLY. The Cytoplasmic segment spans residues 553 to 830; the sequence is WNIFKALRSR…AKKERKATKT (278 aa). 3 disordered regions span residues 600 to 631, 702 to 753, and 780 to 799; these read SRHA…ISPD, ATSA…SVGV, and DSTL…KNSQ. The span at 702–722 shows a compositional bias: low complexity; that stretch reads ATSAAPRSSGSPPDSPLPSGA. Residues 723–734 show a composition bias toward polar residues; that stretch reads TLQRSSVSSQRR. Basic and acidic residues predominate over residues 735 to 746; sequence PTGDDSPKRGEP. A helical membrane pass occupies residues 831–851; the sequence is LAIVLGVFLFCWLPFFSCNIM. Over 852 to 869 the chain is Extracellular; sequence DAMCAKFKKDCRPGLTAY. The chain crosses the membrane as a helical span at residues 870-890; sequence MMTTWLGYINSFVNPVIYTIF. Residues 891-905 are Cytoplasmic-facing; that stretch reads NPEFRKAFKKIMHMG.

The protein belongs to the G-protein coupled receptor 1 family. Highest expression is in adult heads.

It localises to the cell membrane. Functionally, receptor for dopamine. The activity of this receptor is mediated by G proteins which inhibit adenylyl cyclase. This is Dopamine D2-like receptor from Drosophila melanogaster (Fruit fly).